Reading from the N-terminus, the 539-residue chain is GMP synthase [glutamine-hydrolyzing] (539 aa).

One can recognise a Glutamine amidotransferase type-1 domain in the interval 4 to 202; the sequence is KILILDFGSQ…VLGIAGCKPD (199 aa). C81 functions as the Nucleophile in the catalytic mechanism. Catalysis depends on residues H176 and E178. The 193-residue stretch at 203 to 395 folds into the GMPS ATP-PPase domain; that stretch reads WVMRDHIEEA…LGLPPEMVYR (193 aa). 230–236 contributes to the ATP binding site; that stretch reads SGGVDSS.

As to quaternary structure, homodimer.

It catalyses the reaction XMP + L-glutamine + ATP + H2O = GMP + L-glutamate + AMP + diphosphate + 2 H(+). The protein operates within purine metabolism; GMP biosynthesis; GMP from XMP (L-Gln route): step 1/1. Functionally, catalyzes the synthesis of GMP from XMP. This chain is GMP synthase [glutamine-hydrolyzing], found in Cupriavidus necator (strain ATCC 17699 / DSM 428 / KCTC 22496 / NCIMB 10442 / H16 / Stanier 337) (Ralstonia eutropha).